We begin with the raw amino-acid sequence, 99 residues long: Small ribosomal subunit protein bS20 (99 aa).

Over residues 1–20 (MASAKPKKKNPRLASGRKRV) the composition is skewed to basic residues. The tract at residues 1–21 (MASAKPKKKNPRLASGRKRVR) is disordered.

It belongs to the bacterial ribosomal protein bS20 family.

In terms of biological role, binds directly to 16S ribosomal RNA. In Verminephrobacter eiseniae (strain EF01-2), this protein is Small ribosomal subunit protein bS20.